The following is a 465-amino-acid chain: Trigger factor (465 aa).

The 82-residue stretch at 164–245 folds into the PPIase FKBP-type domain; it reads GDFVSIDLSA…VQSVKERELP (82 aa). Residues 430–465 are disordered; that stretch reads GNTVDTAEMFGEPAAEPEQADAAQAGDAEKAAADSE. A compositionally biased stretch (low complexity) spans 440–455; that stretch reads GEPAAEPEQADAAQAG. Residues 456–465 show a composition bias toward basic and acidic residues; sequence DAEKAAADSE.

It belongs to the FKBP-type PPIase family. Tig subfamily.

It localises to the cytoplasm. The enzyme catalyses [protein]-peptidylproline (omega=180) = [protein]-peptidylproline (omega=0). Functionally, involved in protein export. Acts as a chaperone by maintaining the newly synthesized protein in an open conformation. Functions as a peptidyl-prolyl cis-trans isomerase. The polypeptide is Trigger factor (Nocardia farcinica (strain IFM 10152)).